We begin with the raw amino-acid sequence, 330 residues long: Aspartate--ammonia ligase (330 aa).

Belongs to the class-II aminoacyl-tRNA synthetase family. AsnA subfamily.

The protein resides in the cytoplasm. It catalyses the reaction L-aspartate + NH4(+) + ATP = L-asparagine + AMP + diphosphate + H(+). It participates in amino-acid biosynthesis; L-asparagine biosynthesis; L-asparagine from L-aspartate (ammonia route): step 1/1. In Photorhabdus laumondii subsp. laumondii (strain DSM 15139 / CIP 105565 / TT01) (Photorhabdus luminescens subsp. laumondii), this protein is Aspartate--ammonia ligase.